Here is a 475-residue protein sequence, read N- to C-terminus: Aspartyl/glutamyl-tRNA(Asn/Gln) amidotransferase subunit B (475 aa).

This sequence belongs to the GatB/GatE family. GatB subfamily. In terms of assembly, heterotrimer of A, B and C subunits.

It catalyses the reaction L-glutamyl-tRNA(Gln) + L-glutamine + ATP + H2O = L-glutaminyl-tRNA(Gln) + L-glutamate + ADP + phosphate + H(+). The enzyme catalyses L-aspartyl-tRNA(Asn) + L-glutamine + ATP + H2O = L-asparaginyl-tRNA(Asn) + L-glutamate + ADP + phosphate + 2 H(+). Its function is as follows. Allows the formation of correctly charged Asn-tRNA(Asn) or Gln-tRNA(Gln) through the transamidation of misacylated Asp-tRNA(Asn) or Glu-tRNA(Gln) in organisms which lack either or both of asparaginyl-tRNA or glutaminyl-tRNA synthetases. The reaction takes place in the presence of glutamine and ATP through an activated phospho-Asp-tRNA(Asn) or phospho-Glu-tRNA(Gln). The protein is Aspartyl/glutamyl-tRNA(Asn/Gln) amidotransferase subunit B of Bacillus cereus (strain ATCC 10987 / NRS 248).